The primary structure comprises 851 residues: Alanine--tRNA ligase (851 aa).

4 residues coordinate Zn(2+): His535, His539, Cys637, and His641.

This sequence belongs to the class-II aminoacyl-tRNA synthetase family. Zn(2+) serves as cofactor.

The protein localises to the cytoplasm. It carries out the reaction tRNA(Ala) + L-alanine + ATP = L-alanyl-tRNA(Ala) + AMP + diphosphate. Functionally, catalyzes the attachment of alanine to tRNA(Ala) in a two-step reaction: alanine is first activated by ATP to form Ala-AMP and then transferred to the acceptor end of tRNA(Ala). Also edits incorrectly charged Ser-tRNA(Ala) and Gly-tRNA(Ala) via its editing domain. The protein is Alanine--tRNA ligase of Acholeplasma laidlawii (strain PG-8A).